A 480-amino-acid chain; its full sequence is UDP-N-acetylmuramoylalanine--D-glutamate ligase (480 aa).

Residue 110–116 (GTNGKST) participates in ATP binding.

The protein belongs to the MurCDEF family.

The protein localises to the cytoplasm. The enzyme catalyses UDP-N-acetyl-alpha-D-muramoyl-L-alanine + D-glutamate + ATP = UDP-N-acetyl-alpha-D-muramoyl-L-alanyl-D-glutamate + ADP + phosphate + H(+). The protein operates within cell wall biogenesis; peptidoglycan biosynthesis. Functionally, cell wall formation. Catalyzes the addition of glutamate to the nucleotide precursor UDP-N-acetylmuramoyl-L-alanine (UMA). This is UDP-N-acetylmuramoylalanine--D-glutamate ligase from Synechococcus sp. (strain JA-2-3B'a(2-13)) (Cyanobacteria bacterium Yellowstone B-Prime).